A 333-amino-acid polypeptide reads, in one-letter code: Transaldolase (333 aa).

K135 acts as the Schiff-base intermediate with substrate in catalysis.

This sequence belongs to the transaldolase family. Type 1 subfamily. As to quaternary structure, homodimer.

It is found in the cytoplasm. The enzyme catalyses D-sedoheptulose 7-phosphate + D-glyceraldehyde 3-phosphate = D-erythrose 4-phosphate + beta-D-fructose 6-phosphate. It participates in carbohydrate degradation; pentose phosphate pathway; D-glyceraldehyde 3-phosphate and beta-D-fructose 6-phosphate from D-ribose 5-phosphate and D-xylulose 5-phosphate (non-oxidative stage): step 2/3. In terms of biological role, transaldolase is important for the balance of metabolites in the pentose-phosphate pathway. This chain is Transaldolase, found in Prochlorococcus marinus subsp. pastoris (strain CCMP1986 / NIES-2087 / MED4).